The sequence spans 241 residues: Pyridoxine 5'-phosphate synthase (241 aa).

Residue Asn10 participates in 3-amino-2-oxopropyl phosphate binding. Asp12 to His13 contributes to the 1-deoxy-D-xylulose 5-phosphate binding site. Arg21 serves as a coordination point for 3-amino-2-oxopropyl phosphate. Residue His48 is the Proton acceptor of the active site. 1-deoxy-D-xylulose 5-phosphate is bound by residues Arg50 and His55. The Proton acceptor role is filled by Glu75. Thr105 lines the 1-deoxy-D-xylulose 5-phosphate pocket. His195 serves as the catalytic Proton donor. 3-amino-2-oxopropyl phosphate contacts are provided by residues Gly196 and Gly217–His218.

It belongs to the PNP synthase family. In terms of assembly, homooctamer; tetramer of dimers.

It is found in the cytoplasm. It carries out the reaction 3-amino-2-oxopropyl phosphate + 1-deoxy-D-xylulose 5-phosphate = pyridoxine 5'-phosphate + phosphate + 2 H2O + H(+). Its pathway is cofactor biosynthesis; pyridoxine 5'-phosphate biosynthesis; pyridoxine 5'-phosphate from D-erythrose 4-phosphate: step 5/5. Functionally, catalyzes the complicated ring closure reaction between the two acyclic compounds 1-deoxy-D-xylulose-5-phosphate (DXP) and 3-amino-2-oxopropyl phosphate (1-amino-acetone-3-phosphate or AAP) to form pyridoxine 5'-phosphate (PNP) and inorganic phosphate. The sequence is that of Pyridoxine 5'-phosphate synthase from Bdellovibrio bacteriovorus (strain ATCC 15356 / DSM 50701 / NCIMB 9529 / HD100).